The following is a 375-amino-acid chain: Putative disease resistance protein At3g15700 (375 aa).

A coiled-coil region spans residues 17-49; sequence KENDNVKKLKTATEELKDLRNIVMKRVKMYEDQ. Positions 158 to 372 constitute an NB-ARC domain; that stretch reads DNTGIIGLYG…LSTSPPNFSG (215 aa). Residue 167 to 174 participates in ATP binding; it reads GVEGVGKT.

Potential disease resistance protein. This is Putative disease resistance protein At3g15700 from Arabidopsis thaliana (Mouse-ear cress).